A 154-amino-acid chain; its full sequence is Ribosome maturation factor RimP (154 aa).

The protein belongs to the RimP family.

The protein localises to the cytoplasm. In terms of biological role, required for maturation of 30S ribosomal subunits. In Clostridium novyi (strain NT), this protein is Ribosome maturation factor RimP.